The following is a 298-amino-acid chain: N-acetylmuramic acid 6-phosphate etherase (298 aa).

An SIS domain is found at 55-218; the sequence is IHAQVSGGGR…STGLMIKSGK (164 aa). Catalysis depends on glutamate 83, which acts as the Proton donor. Glutamate 114 is a catalytic residue.

The protein belongs to the GCKR-like family. MurNAc-6-P etherase subfamily. As to quaternary structure, homodimer.

The enzyme catalyses N-acetyl-D-muramate 6-phosphate + H2O = N-acetyl-D-glucosamine 6-phosphate + (R)-lactate. It participates in amino-sugar metabolism; 1,6-anhydro-N-acetylmuramate degradation. It functions in the pathway amino-sugar metabolism; N-acetylmuramate degradation. Its pathway is cell wall biogenesis; peptidoglycan recycling. Specifically catalyzes the cleavage of the D-lactyl ether substituent of MurNAc 6-phosphate, producing GlcNAc 6-phosphate and D-lactate. Together with AnmK, is also required for the utilization of anhydro-N-acetylmuramic acid (anhMurNAc) either imported from the medium or derived from its own cell wall murein, and thus plays a role in cell wall recycling. The chain is N-acetylmuramic acid 6-phosphate etherase from Escherichia coli O7:K1 (strain IAI39 / ExPEC).